A 103-amino-acid chain; its full sequence is Small ribosomal subunit protein uS10 (103 aa).

Belongs to the universal ribosomal protein uS10 family. As to quaternary structure, part of the 30S ribosomal subunit.

In terms of biological role, involved in the binding of tRNA to the ribosomes. The chain is Small ribosomal subunit protein uS10 from Buchnera aphidicola subsp. Acyrthosiphon pisum (strain 5A).